The chain runs to 528 residues: Phosphoenolpyruvate carboxykinase (ATP) (528 aa).

Residues arginine 54, tyrosine 190, and lysine 196 each contribute to the substrate site. Residues lysine 196, histidine 215, and 231–239 contribute to the ATP site; that span reads GLSGTGKTT. Residues lysine 196 and histidine 215 each coordinate Mn(2+). Aspartate 252 provides a ligand contact to Mn(2+). Positions 280, 316, and 441 each coordinate ATP. Residue arginine 316 participates in substrate binding.

Belongs to the phosphoenolpyruvate carboxykinase (ATP) family. Requires Mn(2+) as cofactor.

The protein resides in the cytoplasm. It carries out the reaction oxaloacetate + ATP = phosphoenolpyruvate + ADP + CO2. It functions in the pathway carbohydrate biosynthesis; gluconeogenesis. Functionally, involved in the gluconeogenesis. Catalyzes the conversion of oxaloacetate (OAA) to phosphoenolpyruvate (PEP) through direct phosphoryl transfer between the nucleoside triphosphate and OAA. This chain is Phosphoenolpyruvate carboxykinase (ATP), found in Sulfurimonas denitrificans (strain ATCC 33889 / DSM 1251) (Thiomicrospira denitrificans (strain ATCC 33889 / DSM 1251)).